Here is a 120-residue protein sequence, read N- to C-terminus: Fluoride-specific ion channel FluC (120 aa).

3 helical membrane passes run 30–50 (FGTL…YGLL), 66–86 (VGFL…LLLL), and 96–116 (LNII…LQLV). Na(+)-binding residues include Gly70 and Thr73.

This sequence belongs to the fluoride channel Fluc/FEX (TC 1.A.43) family.

It is found in the cell inner membrane. The catalysed reaction is fluoride(in) = fluoride(out). Its activity is regulated as follows. Na(+) is not transported, but it plays an essential structural role and its presence is essential for fluoride channel function. Its function is as follows. Fluoride-specific ion channel. Important for reducing fluoride concentration in the cell, thus reducing its toxicity. This is Fluoride-specific ion channel FluC from Pseudoalteromonas translucida (strain TAC 125).